Reading from the N-terminus, the 419-residue chain is Histidine--tRNA ligase (419 aa).

This sequence belongs to the class-II aminoacyl-tRNA synthetase family. As to quaternary structure, homodimer.

Its subcellular location is the cytoplasm. It carries out the reaction tRNA(His) + L-histidine + ATP = L-histidyl-tRNA(His) + AMP + diphosphate + H(+). This is Histidine--tRNA ligase from Novosphingobium aromaticivorans (strain ATCC 700278 / DSM 12444 / CCUG 56034 / CIP 105152 / NBRC 16084 / F199).